A 264-amino-acid polypeptide reads, in one-letter code: Thymidylate synthase (264 aa).

Arg21 lines the dUMP pocket. His51 is a (6R)-5,10-methylene-5,6,7,8-tetrahydrofolate binding site. Position 126–127 (126–127) interacts with dUMP; the sequence is RR. Cys146 serves as the catalytic Nucleophile. DUMP is bound by residues 166 to 169, Asn177, and 207 to 209; these read RSCD and HLY. Position 169 (Asp169) interacts with (6R)-5,10-methylene-5,6,7,8-tetrahydrofolate. Ala263 contacts (6R)-5,10-methylene-5,6,7,8-tetrahydrofolate.

The protein belongs to the thymidylate synthase family. Bacterial-type ThyA subfamily. In terms of assembly, homodimer.

The protein resides in the cytoplasm. The catalysed reaction is dUMP + (6R)-5,10-methylene-5,6,7,8-tetrahydrofolate = 7,8-dihydrofolate + dTMP. It functions in the pathway pyrimidine metabolism; dTTP biosynthesis. Its function is as follows. Catalyzes the reductive methylation of 2'-deoxyuridine-5'-monophosphate (dUMP) to 2'-deoxythymidine-5'-monophosphate (dTMP) while utilizing 5,10-methylenetetrahydrofolate (mTHF) as the methyl donor and reductant in the reaction, yielding dihydrofolate (DHF) as a by-product. This enzymatic reaction provides an intracellular de novo source of dTMP, an essential precursor for DNA biosynthesis. This chain is Thymidylate synthase, found in Shigella boydii serotype 4 (strain Sb227).